A 1518-amino-acid chain; its full sequence is Putative cellulose synthase 3 (1518 aa).

Residues 1–731 (MYGTWFTTGK…EEKLEKQSFV (731 aa)) are catalytic. The next 3 membrane-spanning stretches (helical) occupy residues 24–44 (PVWV…SVRI), 71–91 (ITVF…VWRL), and 105–125 (LAVL…LSYF). Residues 144 to 237 (QWPSVDVFVP…FAVIFDCDHV (94 aa)) are catalytic subdomain A. Catalysis depends on residues aspartate 186 and aspartate 330. The interval 314–374 (EAVMGIGGFA…GQRVRWARGM (61 aa)) is catalytic subdomain B. A run of 5 helical transmembrane segments spans residues 404-424 (FLFA…LFLG), 428-448 (IAAS…HSVI), 465-485 (IYET…LLQP), 514-534 (ILAG…VWQF), and 543-563 (FILN…SIAV). The region spanning 569 to 668 (QTRNAPRVSV…ERQVVSMVFG (100 aa)) is the PilZ domain. Residues 732-1518 (LKPVPRSARH…IARDDLTGEL (787 aa)) are cyclic di-GMP binding domain. A disordered region spans residues 765-785 (APSPDQSGVTAETPFGDSNTG). Positions 768-785 (PDQSGVTAETPFGDSNTG) are enriched in polar residues. The chain crosses the membrane as a helical span at residues 1481-1501 (ALYLAGLAGAGLAALGVWAWL).

In the N-terminal section; belongs to the glycosyltransferase 2 family. The protein in the C-terminal section; belongs to the AcsB/BcsB family.

The protein localises to the cell inner membrane. It carries out the reaction [(1-&gt;4)-beta-D-glucosyl](n) + UDP-alpha-D-glucose = [(1-&gt;4)-beta-D-glucosyl](n+1) + UDP + H(+). It participates in glycan metabolism; bacterial cellulose biosynthesis. This Komagataeibacter xylinus (Gluconacetobacter xylinus) protein is Putative cellulose synthase 3 (bcsABII-B).